Reading from the N-terminus, the 204-residue chain is Cytochrome P450 monooxygenase PC-23 (204 aa).

Cys138 lines the heme pocket.

Belongs to the cytochrome P450 family. Requires heme as cofactor.

Its pathway is secondary metabolite biosynthesis. In terms of biological role, cytochrome P450 monooxygenase; part of the gene cluster that mediates the biosynthesis of the indole diterpenes penitrems. The geranylgeranyl diphosphate (GGPP) synthase penG catalyzes the first step in penitrem biosynthesis via conversion of farnesyl pyrophosphate and isopentyl pyrophosphate into geranylgeranyl pyrophosphate (GGPP). Condensation of indole-3-glycerol phosphate with GGPP by the prenyl transferase penC then forms 3-geranylgeranylindole (3-GGI). Epoxidation by the FAD-dependent monooxygenase penM leads to a epoxidized-GGI that is substrate of the terpene cyclase penB for cyclization to yield paspaline. Paspaline is subsequently converted to 13-desoxypaxilline by the cytochrome P450 monooxygenase penP, the latter being then converted to paxilline by the cytochrome P450 monooxygenase penQ. Paxilline is converted to beta-paxitriol via C-10 ketoreduction by the short-chain dehydrogenase PC-15 which can be monoprenylated at the C-20 by the indole diterpene prenyltransferase penD. A two-step elimination (acetylation and elimination) process performed by the O-acetyltransferase PC-16 and the P.simplicissimum ptmI-ortholog not yet identified in P.crustosum, leads to the production of the prenylated form of penijanthine. The FAD-linked oxidoreductase ptmO then converts the prenylated form of penijanthine into PC-M5 which is in turn transformed into PC-M4 by the aromatic dimethylallyltransferase PC-22. A series of oxidation steps involving 4 cytochrome P450 monooxygenases (PC-21, PC-05, PC-23, PC-20) and a FAD-dependent monooxygenase (PC-14) are required for the transformation of PC-M4 to penitrems A and E. Synthesis of these final products is proposed to proceed via penitrems D and C (PC-21, PC-05, PC-14) and penitrems B and F (PC-21, PC-05, PC-14, PC-23). This is Cytochrome P450 monooxygenase PC-23 from Penicillium crustosum (Blue mold fungus).